The following is a 205-amino-acid chain: Small ribosomal subunit protein uS7 (205 aa).

It belongs to the universal ribosomal protein uS7 family. As to quaternary structure, part of the 30S ribosomal subunit.

Functionally, one of the primary rRNA binding proteins, it binds directly to 16S rRNA where it nucleates assembly of the head domain of the 30S subunit. Is located at the subunit interface close to the decoding center. The polypeptide is Small ribosomal subunit protein uS7 (Aeropyrum pernix (strain ATCC 700893 / DSM 11879 / JCM 9820 / NBRC 100138 / K1)).